A 423-amino-acid polypeptide reads, in one-letter code: Histidine--tRNA ligase (423 aa).

It belongs to the class-II aminoacyl-tRNA synthetase family. As to quaternary structure, homodimer.

The protein localises to the cytoplasm. It carries out the reaction tRNA(His) + L-histidine + ATP = L-histidyl-tRNA(His) + AMP + diphosphate + H(+). This chain is Histidine--tRNA ligase, found in Prochlorococcus marinus (strain MIT 9211).